The following is a 381-amino-acid chain: Spindlin interactor and repressor of chromatin-binding protein (381 aa).

Lys49 participates in a covalent cross-link: Glycyl lysine isopeptide (Lys-Gly) (interchain with G-Cter in SUMO2). Phosphoserine is present on residues Ser122 and Ser149. Residues 148–158 are compositionally biased toward polar residues; it reads PSLPSLESGQD. A disordered region spans residues 148 to 170; that stretch reads PSLPSLESGQDGQPDPISNPDPV. Glycyl lysine isopeptide (Lys-Gly) (interchain with G-Cter in SUMO2) cross-links involve residues Lys190 and Lys221. Disordered regions lie at residues 203–270, 285–320, and 335–381; these read PVTP…TDGS, LRTT…LRGT, and AVSL…GSGV. Basic and acidic residues predominate over residues 219–229; it reads RWKESPENEPA. Ser249 and Ser252 each carry phosphoserine. Basic and acidic residues predominate over residues 288–299; that stretch reads TDCKDSSKDSRA. Residues Lys291 and Lys295 each participate in a glycyl lysine isopeptide (Lys-Gly) (interchain with G-Cter in SUMO2) cross-link. The segment covering 304 to 315 has biased composition (low complexity); it reads PQPQNPSSASPP. A phosphoserine mark is found at Ser310 and Ser313.

In terms of assembly, interacts with SPIN1, SPIN2A, SPIN2B, SPIN3 and SPIN4. Interacts with TCF7L2 in a SPIN1-dependent manner. Interacts with PARP1; promoting PARP1 ADP-ribosyltransferase activity.

Its subcellular location is the nucleus. It localises to the chromosome. Chromatin protein that stabilizes SPIN1 and enhances its association with histone H3 trimethylated at both 'Lys-4' and 'Lys-9' (H3K4me3K9me3). Positively regulates poly-ADP-ribosylation in response to DNA damage; acts by facilitating PARP1 ADP-ribosyltransferase activity. This Mus musculus (Mouse) protein is Spindlin interactor and repressor of chromatin-binding protein.